A 561-amino-acid polypeptide reads, in one-letter code: Transcription factor Clamp (561 aa).

The C2H2-type 1 zinc finger occupies 127 to 149 (FKCDVCSDMFPHLALLNAHKRMH). Positions 129, 132, 145, and 149 each coordinate Zn(2+). The interval 290–315 (TGGTTPKREASSGSGHHPVKKRNSQQ) is disordered. 6 C2H2-type zinc fingers span residues 360–382 (FSCN…KKLH), 388–410 (YKCS…ARIH), 416–438 (YKCQ…ERTH), 444–466 (YVCG…RRIH), 472–494 (YKCE…AKVH), and 500–522 (YKCE…RGIH).

In terms of assembly, homodimer. Interacts with msl-2; promoting recruitment of the male-specific lethal (MSL) histone acetyltransferase complex to chromatin. Interacts with Nelf-A. Interacts with NELF-B.

It is found in the nucleus. The protein resides in the chromosome. Functionally, transcription factor involved in X-chromosome dosage compensation in males, the process by which transcription of the single X chromosome in the male is elevated. Binds to the DNA sequence (GA)n. Clamp-binding promotes nucleosome depletion and chromatin accessibility, thereby allowing access to other transcription factors. Specifically binds to cis-acting elements on the X-chromosome named chromatin entry sites and promotes recruitment of the male-specific lethal (MSL) histone acetyltransferase complex, which associates with actively transcribed genes on the male X-chromosome to upregulate their expression. Mechanistically, acts by promoting chromatin accessibility at chromatin entry sites, facilitating DNA-binding of msl-2, followed by MSL complex recruitment. In addition to dosage compensation, also involved in zygotic genome activation (ZGA), a critical event in early embryonic development during which the developmental control passes from maternally provided mRNAs to the expression of the zygotic genome after fertilization. Maternally-provided protein cooperates with Zelda (zld) to activate zygotic transcription by increasing chromatin accessibility at promoters of specific genes and facilitate zld occupancy at a subset of key embryonic promoters. Also acts as an activator of gypsy chromatin insulator function by promoting binding of Cp190 to chromatin. This Drosophila melanogaster (Fruit fly) protein is Transcription factor Clamp.